A 264-amino-acid chain; its full sequence is Small ribosomal subunit protein eS1 (264 aa).

The residue at position 34 (lysine 34) is an N6-acetyllysine; alternate. A Glycyl lysine isopeptide (Lys-Gly) (interchain with G-Cter in SUMO2); alternate cross-link involves residue lysine 34. Lysine 56 bears the N6-acetyllysine mark. Position 155 is an ADP-ribosyltyrosine (tyrosine 155). A disordered region spans residues 233–264; the sequence is GEGSSSGKATGDETGAKVERADGYEPPVQESV. A phosphoserine mark is found at serine 236 and serine 237. A compositionally biased stretch (basic and acidic residues) spans 242–255; sequence TGDETGAKVERADG. Lysine 249 is subject to N6-acetyllysine; alternate. Lysine 249 participates in a covalent cross-link: Glycyl lysine isopeptide (Lys-Gly) (interchain with G-Cter in SUMO2); alternate. Residue tyrosine 256 is modified to Phosphotyrosine. Residue serine 263 is modified to Phosphoserine.

This sequence belongs to the eukaryotic ribosomal protein eS1 family. Component of the small ribosomal subunit. Mature ribosomes consist of a small (40S) and a large (60S) subunit. The 40S subunit contains about 33 different proteins and 1 molecule of RNA (18S). The 60S subunit contains about 49 different proteins and 3 molecules of RNA (28S, 5.8S and 5S). Part of the small subunit (SSU) processome, composed of more than 70 proteins and the RNA chaperone small nucleolar RNA (snoRNA) U3. In terms of processing, ADP-ribosylated at Tyr-155 by PARP1 in presence of HPF1.

Its subcellular location is the cytoplasm. The protein localises to the nucleus. The protein resides in the nucleolus. In terms of biological role, component of the small ribosomal subunit. The ribosome is a large ribonucleoprotein complex responsible for the synthesis of proteins in the cell. Part of the small subunit (SSU) processome, first precursor of the small eukaryotic ribosomal subunit. During the assembly of the SSU processome in the nucleolus, many ribosome biogenesis factors, an RNA chaperone and ribosomal proteins associate with the nascent pre-rRNA and work in concert to generate RNA folding, modifications, rearrangements and cleavage as well as targeted degradation of pre-ribosomal RNA by the RNA exosome. May play a role during erythropoiesis. The polypeptide is Small ribosomal subunit protein eS1 (Callithrix jacchus (White-tufted-ear marmoset)).